The following is a 199-amino-acid chain: Elongation factor Ts (199 aa).

The involved in Mg(2+) ion dislocation from EF-Tu stretch occupies residues 80 to 83 (TDFV).

The protein belongs to the EF-Ts family.

The protein resides in the cytoplasm. Functionally, associates with the EF-Tu.GDP complex and induces the exchange of GDP to GTP. It remains bound to the aminoacyl-tRNA.EF-Tu.GTP complex up to the GTP hydrolysis stage on the ribosome. The sequence is that of Elongation factor Ts from Thermodesulfovibrio yellowstonii (strain ATCC 51303 / DSM 11347 / YP87).